The following is a 310-amino-acid chain: 1-aminocyclopropane-1-carboxylate oxidase 1 (310 aa).

Residues 113–133 (EELSKTMDEYVCQLHKFAERL) are a coiled coil. In terms of domain architecture, Fe2OG dioxygenase spans 158-259 (PAFGTKVAKY…RLSIATFYNP (102 aa)). 3 residues coordinate Fe cation: His-182, Asp-184, and His-240. Arg-250 serves as a coordination point for 2-oxoglutarate.

Belongs to the iron/ascorbate-dependent oxidoreductase family. The cofactor is Fe(2+).

The enzyme catalyses 1-aminocyclopropane-1-carboxylate + L-ascorbate + O2 = ethene + L-dehydroascorbate + hydrogen cyanide + CO2 + 2 H2O. It participates in alkene biosynthesis; ethylene biosynthesis via S-adenosyl-L-methionine; ethylene from S-adenosyl-L-methionine: step 2/2. Its function is as follows. Enzyme involved in the ethylene biosynthesis. May promote stem elongation by maximizing the extensibility cells, possibly by activating ethylene biosynthesis, in response to very-long-chain fatty acids (VLCFAs C20:0 to C30:0). This Arabidopsis thaliana (Mouse-ear cress) protein is 1-aminocyclopropane-1-carboxylate oxidase 1 (ACO1).